We begin with the raw amino-acid sequence, 566 residues long: Liver carboxylesterase (566 aa).

Residues 1-18 (MWLLPLVLTSLASSATWA) form the signal peptide. Asparagine 80 carries an N-linked (GlcNAc...) asparagine glycan. Cysteine 88 and cysteine 117 are disulfide-bonded. Serine 222 serves as the catalytic Acyl-ester intermediate. A disulfide bond links cysteine 274 and cysteine 285. Glutamate 354 functions as the Charge relay system in the catalytic mechanism. Residue serine 379 is modified to Phosphoserine. Catalysis depends on histidine 467, which acts as the Charge relay system. The Prevents secretion from ER motif lies at 563-566 (HAEL).

The protein belongs to the type-B carboxylesterase/lipase family.

Its subcellular location is the endoplasmic reticulum lumen. It catalyses the reaction a carboxylic ester + H2O = an alcohol + a carboxylate + H(+). With respect to regulation, activated by CHAPS at concentrations of up to 130 mM, higher concentrations reduce activity. In the presence of CHAPS, activity is stimulated by non-ionic detergents. Inhibited by the esterase inhibitors diisopropylfluorophosphate and phenylmethylsulfonyl fluoride. Its function is as follows. Involved in the detoxification of xenobiotics and in the activation of ester and amide prodrugs. Active towards triacylglycerides containing short-chain fatty acids from C2 to C6, and 1(3)-monoacylglycerols containing fatty acids from C2 to C12. Inactive on long-chain triacylglycerols and diacylglycerol. Hydrolyzes aromatic and alkyl esters and vitamin A acetate. The hydrolysis rate depends upon the amino acid promoiety and the esterification site of the prodrug. Aromatic promoieties are favored, highest rates are observed with phenylalanyl progdrugs, hydrolysis of valyl and isoleucyl prodrugs is less efficient. With floxuridine prodrugs, activity is higher on 5' monoesters than on 3' monoesters. With gemcitabine prodrugs, activity is higher on 3' monoesters than on 5' monoesters. This chain is Liver carboxylesterase, found in Sus scrofa (Pig).